We begin with the raw amino-acid sequence, 423 residues long: MNAPLASGRPDIQSADGIWHCCHLLPDADPDRAVRDAALVVEQGRIAWLGAEAELPADYRSLPRHDAGGTWMTPGLVDCHTHLVYGGQRADEFAMRLAGASYEEIARAGGGIVSSVRATRAADEDTLFSQAAARLAPLLAEGVTAIEIKSGYGLELEAERRQLRVARRLGEAFGVSVHTTFLGAHALPPEYAGRADDYIDLVCNTMLPALAEEGLVDAVDAFCESVGFSLAQTERVFEAAARHGLRVKLHAEQLSNLGGAALAARHHALSADHLEHLDEAGVEAMAAAGTVAVLLPGAYYFLRDTNLPPIALLRKHGVPIAISTDHNPGTSPVTSLLLMMNMACTLFRLTVPEALAGVTTHAARALGAPDRHGKLAVGRAADFVLWRVESPAELAYWFGRNPAAVVVRQGRIHPATSQHGGRA.

Residues H80 and H82 each contribute to the Fe(3+) site. Residues H80 and H82 each contribute to the Zn(2+) site. Residues R89, Y152, and H185 each coordinate 4-imidazolone-5-propanoate. Y152 is an N-formimidoyl-L-glutamate binding site. Residue H250 coordinates Fe(3+). Residue H250 coordinates Zn(2+). Q253 is a 4-imidazolone-5-propanoate binding site. D325 is a binding site for Fe(3+). Position 325 (D325) interacts with Zn(2+). N327 and G329 together coordinate N-formimidoyl-L-glutamate. T330 contributes to the 4-imidazolone-5-propanoate binding site.

The protein belongs to the metallo-dependent hydrolases superfamily. HutI family. Zn(2+) is required as a cofactor. The cofactor is Fe(3+).

It is found in the cytoplasm. The catalysed reaction is 4-imidazolone-5-propanoate + H2O = N-formimidoyl-L-glutamate. It participates in amino-acid degradation; L-histidine degradation into L-glutamate; N-formimidoyl-L-glutamate from L-histidine: step 3/3. In terms of biological role, catalyzes the hydrolytic cleavage of the carbon-nitrogen bond in imidazolone-5-propanoate to yield N-formimidoyl-L-glutamate. It is the third step in the universal histidine degradation pathway. The protein is Imidazolonepropionase of Cupriavidus pinatubonensis (strain JMP 134 / LMG 1197) (Cupriavidus necator (strain JMP 134)).